A 549-amino-acid polypeptide reads, in one-letter code: Glucose-6-phosphate isomerase (549 aa).

N6-acetyllysine is present on residues lysine 80, lysine 228, and lysine 234. Glutamate 355 functions as the Proton donor in the catalytic mechanism. Residues histidine 386 and lysine 514 contribute to the active site.

This sequence belongs to the GPI family.

The protein resides in the cytoplasm. It catalyses the reaction alpha-D-glucose 6-phosphate = beta-D-fructose 6-phosphate. The protein operates within carbohydrate biosynthesis; gluconeogenesis. Its pathway is carbohydrate degradation; glycolysis; D-glyceraldehyde 3-phosphate and glycerone phosphate from D-glucose: step 2/4. Its function is as follows. Catalyzes the reversible isomerization of glucose-6-phosphate to fructose-6-phosphate. In Shigella flexneri serotype 5b (strain 8401), this protein is Glucose-6-phosphate isomerase.